The chain runs to 375 residues: Protein MGF 360-5L (375 aa).

It belongs to the asfivirus MGF 360 family.

In terms of biological role, plays a role in virus cell tropism, and may be required for efficient virus replication in macrophages. The chain is Protein MGF 360-5L from African swine fever virus (isolate Portugal/Lis 57/1957) (ASFV).